A 334-amino-acid polypeptide reads, in one-letter code: Protein-methionine-sulfoxide reductase catalytic subunit MsrP (334 aa).

A signal peptide (tat-type signal) is located at residues 1–44 (MKKNQFLKESDVTAESVFFMKRRQVLKALGISATALSLPHAAHA). Mo-molybdopterin is bound by residues Asn-88, 91-92 (YE), Cys-146, Thr-181, Asn-233, Arg-238, and 249-251 (GIK).

Belongs to the MsrP family. As to quaternary structure, heterodimer of a catalytic subunit (MsrP) and a heme-binding subunit (MsrQ). Mo-molybdopterin is required as a cofactor. In terms of processing, exported by the Tat system. Can also be exported by the Sec system.

It localises to the periplasm. It catalyses the reaction L-methionyl-[protein] + a quinone + H2O = L-methionyl-(S)-S-oxide-[protein] + a quinol. The catalysed reaction is L-methionyl-[protein] + a quinone + H2O = L-methionyl-(R)-S-oxide-[protein] + a quinol. Its function is as follows. Part of the MsrPQ system that repairs oxidized periplasmic proteins containing methionine sulfoxide residues (Met-O), using respiratory chain electrons. Thus protects these proteins from oxidative-stress damage caused by reactive species of oxygen and chlorine. MsrPQ is essential for the maintenance of envelope integrity under bleach stress, rescuing a wide series of structurally unrelated periplasmic proteins from methionine oxidation, including the primary periplasmic chaperone SurA and the lipoprotein Pal. The catalytic subunit MsrP is non-stereospecific, being able to reduce both (R-) and (S-) diastereoisomers of methionine sulfoxide. Can catalyze the reduction of a variety of substrates in vitro, including dimethyl sulfoxide, trimethylamine N-oxide, phenylmethyl sulfoxide and L-methionine sulfoxide. Cannot reduce cyclic N-oxides. Shows no activity as sulfite oxidase. This is Protein-methionine-sulfoxide reductase catalytic subunit MsrP from Escherichia coli (strain K12).